The following is a 605-amino-acid chain: Protein ZRG17 (605 aa).

Residues 1–225 (METPQMNAIQ…DLLSNLPWPK (225 aa)) are Cytoplasmic-facing. Ser-16 and Ser-131 each carry phosphoserine. The interval 118–178 (PAPKLVPPPP…PSSAASRTSF (61 aa)) is disordered. Residues 143–176 (SKRSSMTLDSPFNFTTSTLQPHQQTPPSSAASRT) show a composition bias toward polar residues. A helical membrane pass occupies residues 226 to 246 (AYIQLSIAALQIFACLITFQV). Residues 247–254 (GHLYSWSN) are Lumenal-facing. The chain crosses the membrane as a helical span at residues 255–275 (FITLSHFITYDIIGSLVIIFV). The Cytoplasmic segment spans residues 276 to 287 (ENLSQFQVWFTG). Residues 288-308 (TITFPFGLNRIDVLLSFALAV) form a helical membrane-spanning segment. Residue Ser-309 is a topological domain, lumenal. A helical membrane pass occupies residues 310 to 330 (LCFVGLDLLFHIIEEFIVLFV). The Cytoplasmic portion of the chain corresponds to 331 to 363 (ESGSSLTNNHDHDEINEQIPHSHIANANDSQNE). The chain crosses the membrane as a helical span at residues 364-384 (NITLWYSILMINLVLSTLSLY). At 385-399 (KTFYANKYSNLKTKN) the chain is on the lumenal side. Residues 400–420 (PIITITYTAYLFIYPLLLDLL) form a helical membrane-spanning segment. The Cytoplasmic portion of the chain corresponds to 421–422 (SS). A helical membrane pass occupies residues 423–443 (ISDYLATLVISSLILWHGLTI). At 444-545 (ARWTSTVLLM…ERLSEFKSRY (102 aa)) the chain is on the lumenal side. Polar residues predominate over residues 473–482 (DTTAHTQQVE). Residues 473-497 (DTTAHTQQVESKAAKEKPSVRPRSM) form a disordered region. Ser-498 is modified (phosphoserine). Residues 546–566 (ILNYDDIVISKVNFTLYVVLI) traverse the membrane as a helical segment. Residues 567 to 605 (KITMKGGSDDDELMLRLAIDKCIQTSIPTCETTIDIDRI) are Cytoplasmic-facing.

It localises to the endoplasmic reticulum membrane. In Saccharomyces cerevisiae (strain ATCC 204508 / S288c) (Baker's yeast), this protein is Protein ZRG17 (ZRG17).